A 280-amino-acid chain; its full sequence is Eukaryotic translation initiation factor 3 subunit F-1 (280 aa).

Positions 8–138 constitute an MPN domain; that stretch reads VRVHPVVLFQ…LRAYVCIQLG (131 aa).

This sequence belongs to the eIF-3 subunit F family. In terms of assembly, component of the eukaryotic translation initiation factor 3 (eIF-3) complex. The eIF-3 complex interacts with pix.

Its subcellular location is the cytoplasm. In terms of biological role, component of the eukaryotic translation initiation factor 3 (eIF-3) complex, which is involved in protein synthesis of a specialized repertoire of mRNAs and, together with other initiation factors, stimulates binding of mRNA and methionyl-tRNAi to the 40S ribosome. The eIF-3 complex specifically targets and initiates translation of a subset of mRNAs involved in cell proliferation. In Drosophila yakuba (Fruit fly), this protein is Eukaryotic translation initiation factor 3 subunit F-1.